Consider the following 78-residue polypeptide: Large ribosomal subunit protein bL28 (78 aa).

This sequence belongs to the bacterial ribosomal protein bL28 family.

In Glaesserella parasuis serovar 5 (strain SH0165) (Haemophilus parasuis), this protein is Large ribosomal subunit protein bL28.